Consider the following 548-residue polypeptide: T-complex protein 1 subunit alpha (548 aa).

This sequence belongs to the TCP-1 chaperonin family. In terms of assembly, heterooligomeric complex of about 850 to 900 kDa that forms two stacked rings, 12 to 16 nm in diameter.

It is found in the cytoplasm. Molecular chaperone; assists the folding of proteins upon ATP hydrolysis. Known to play a role, in vitro, in the folding of actin and tubulin. The protein is T-complex protein 1 subunit alpha (tcp1) of Dictyostelium discoideum (Social amoeba).